Here is a 257-residue protein sequence, read N- to C-terminus: Acetylglutamate kinase (257 aa).

Residues 43-44, arginine 65, and asparagine 157 contribute to the substrate site; that span reads GG. ATP contacts are provided by residues 180–185 and 208–210; these read DISSIL and IIT.

This sequence belongs to the acetylglutamate kinase family. ArgB subfamily. Homodimer.

It is found in the cytoplasm. It carries out the reaction N-acetyl-L-glutamate + ATP = N-acetyl-L-glutamyl 5-phosphate + ADP. It participates in amino-acid biosynthesis; L-arginine biosynthesis; N(2)-acetyl-L-ornithine from L-glutamate: step 2/4. Catalyzes the ATP-dependent phosphorylation of N-acetyl-L-glutamate. This chain is Acetylglutamate kinase, found in Buchnera aphidicola subsp. Acyrthosiphon pisum (strain Tuc7).